A 234-amino-acid polypeptide reads, in one-letter code: Uridylate kinase (234 aa).

10–11 (GS) is a binding site for ATP. Gly44 lines the UMP pocket. The ATP site is built by Gly45 and Arg49. Residues Asp66 and 114-120 (ITPAQTT) contribute to the UMP site. Residues Thr140, Tyr146, and Asp149 each contribute to the ATP site.

Belongs to the UMP kinase family. Homohexamer.

It is found in the cytoplasm. It catalyses the reaction UMP + ATP = UDP + ADP. It participates in pyrimidine metabolism; CTP biosynthesis via de novo pathway; UDP from UMP (UMPK route): step 1/1. With respect to regulation, inhibited by UTP. In terms of biological role, catalyzes the reversible phosphorylation of UMP to UDP. The polypeptide is Uridylate kinase (Methanoculleus marisnigri (strain ATCC 35101 / DSM 1498 / JR1)).